The following is a 130-amino-acid chain: Small ribosomal subunit protein uS9 (130 aa).

The interval 98 to 130 (LKRAGMLTRDPRMKERKKPGLKGARRSPQFSKR) is disordered. The span at 111 to 130 (KERKKPGLKGARRSPQFSKR) shows a compositional bias: basic residues.

It belongs to the universal ribosomal protein uS9 family.

The chain is Small ribosomal subunit protein uS9 from Macrococcus caseolyticus (strain JCSC5402) (Macrococcoides caseolyticum).